Reading from the N-terminus, the 64-residue chain is Large ribosomal subunit protein bL35 (64 aa).

The protein belongs to the bacterial ribosomal protein bL35 family.

This chain is Large ribosomal subunit protein bL35, found in Alcanivorax borkumensis (strain ATCC 700651 / DSM 11573 / NCIMB 13689 / SK2).